The primary structure comprises 511 residues: MTIILHPGSVLLRDLATIYWTGVPARLDPSFDAGIVKAADRIAEIAAGNAPVYGINTGFGKLASIKIDSADVAALQRNLVLSHCCGVGEALPENVVRLMMALKLVSLGRGASGVRLELVRLIEAMLARGVIPVIPEKGSVGASGDLAPLAHMAAVMMGHGEAFFGGERLNGATALLKAGLQPVELAAKEGLALINGTQTSTALALAGLFRAHRAAQSALITGAMSTDAAMGSSAPFHPEIHTLRGHRGQIDTAEALRALLENSPIRQSHIEGDERVQDPYCIRCQPQVDGACLDLLRSVARTLEIEANAVTDNPLVLSDNSVVAGGNFHAEPVAFAADQIVLAICEIGAIAQRRIALLVDPALSYGLPAFLAKKPGLNSGLMIAEVTSAALMSENKQMSHPASVDSTPTSANQEDHVSMACHGARRLLPMTENLFAIIGIEALCAAQGVELRAPLATSPELTKAIAAIRNVVPSLEEDRYMANDLKAATVLIASGSLNESVSSGILPALEV.

Positions 142–144 (ASG) form a cross-link, 5-imidazolinone (Ala-Gly). Ser143 bears the 2,3-didehydroalanine (Ser) mark.

It belongs to the PAL/histidase family. Post-translationally, contains an active site 4-methylidene-imidazol-5-one (MIO), which is formed autocatalytically by cyclization and dehydration of residues Ala-Ser-Gly.

The protein localises to the cytoplasm. The enzyme catalyses L-histidine = trans-urocanate + NH4(+). Its pathway is amino-acid degradation; L-histidine degradation into L-glutamate; N-formimidoyl-L-glutamate from L-histidine: step 1/3. In Chelativorans sp. (strain BNC1), this protein is Histidine ammonia-lyase.